Consider the following 1128-residue polypeptide: Adipocyte enhancer-binding protein 1 (1128 aa).

Residues 1–25 (MAAVRTASLLCGLLALLALCPEGSP) form the signal peptide. Residues 40–368 (GFLSEFETQS…PRKGEELEEE (329 aa)) are disordered. Residues 77 to 109 (PRADAEAPPEKNKDKEKKGKKDKGPKAAKHLEG) are compositionally biased toward basic and acidic residues. Residues 113–163 (PTKKPKEKPPKATKKPKEKPPKATKKPKEKPPKATKKPKEKPPKATKRPSA) are compositionally biased toward basic residues. Polar residues-rich tracts occupy residues 178-187 (RSLTSPSNPG) and 198-209 (TSLNTWQGQGEE). A compositionally biased stretch (basic residues) spans 249–261 (RQKQPRPTPSRKR). 2 stretches are compositionally biased toward basic and acidic residues: residues 267–282 (PEEKTQEPEERKEVDP) and 327–363 (EELKKPKKEGSSPKEDTEDKWAAEKNKDHKAGPRKGE). The F5/8 type C domain occupies 375–532 (IKCPPIGMES…LCMRLEVLGC (158 aa)). The segment at 382 to 547 (MESHRIEDNQ…YSYYAQNEVV (166 aa)) is required for DNA-binding and interaction with NFKBIA. Interaction with MAPK1 and MAPK3 stretches follow at residues 413 to 616 (AGAN…TAGM) and 998 to 1128 (DPSR…FGDF). N-linked (GlcNAc...) asparagine glycosylation is present at Asn520. Residues 547–977 (VTTDSLDFRH…TQCNFILARS (431 aa)) form an interaction with PTEN region. The Peptidase M14 domain occupies 555–896 (RHHSYKDMRQ…EALLTFMEQV (342 aa)). Residues 933 to 1128 (DYWRILNPGE…ETYTVNFGDF (196 aa)) are required for transcriptional repression. The disordered stretch occupies residues 1027-1056 (LRRLNSTTGPATSPTPALTLPPSPTPGSTS). Low complexity predominate over residues 1030–1044 (LNSTTGPATSPTPAL).

Belongs to the peptidase M14 family. Interacts with different types of collagen, including collagens I, III, and V. Interacts with GNG5, NFKBIA, MAPK1, MAPK3 and PTEN. May interact with calmodulin. Interaction with MAPK1 may stimulate DNA-binding. Binds to DNA in vitro. In terms of processing, phosphorylated by MAPK1 in vitro. Expressed in aorta.

Its subcellular location is the secreted. Its function is as follows. As a positive regulator of collagen fibrillogenesis, it is probably involved in the organization and remodeling of the extracellular matrix. May positively regulate MAP-kinase activity in adipocytes, leading to enhanced adipocyte proliferation and reduced adipocyte differentiation. May also positively regulate NF-kappa-B activity in macrophages by promoting the phosphorylation and subsequent degradation of I-kappa-B-alpha (NFKBIA), leading to enhanced macrophage inflammatory responsiveness. Can act as a transcriptional repressor. In Rattus norvegicus (Rat), this protein is Adipocyte enhancer-binding protein 1 (Aebp1).